The primary structure comprises 96 residues: MEARDIIIRPVITEKSMNLMGDRKYTFIVDKRANKIEIKKAVEEIFGVKVEKVYTMNYKGKPKRMGKYEGRTESYKKAIVKLAPDSKGIEFFEGLQ.

The protein belongs to the universal ribosomal protein uL23 family. Part of the 50S ribosomal subunit. Contacts protein L29, and trigger factor when it is bound to the ribosome.

One of the early assembly proteins it binds 23S rRNA. One of the proteins that surrounds the polypeptide exit tunnel on the outside of the ribosome. Forms the main docking site for trigger factor binding to the ribosome. This chain is Large ribosomal subunit protein uL23, found in Caldanaerobacter subterraneus subsp. tengcongensis (strain DSM 15242 / JCM 11007 / NBRC 100824 / MB4) (Thermoanaerobacter tengcongensis).